A 443-amino-acid polypeptide reads, in one-letter code: Ribosomal protein uS12 methylthiotransferase RimO (443 aa).

The 112-residue stretch at 5 to 116 (PTIAINHLGC…IVDIIRRTEQ (112 aa)) folds into the MTTase N-terminal domain. 6 residues coordinate [4Fe-4S] cluster: cysteine 14, cysteine 50, cysteine 79, cysteine 154, cysteine 158, and cysteine 161. Positions 140–369 (TTNEAIAYLR…MALQQPISAQ (230 aa)) constitute a Radical SAM core domain. The 67-residue stretch at 372 to 438 (AACLGQTLDV…DYDLYGMTAE (67 aa)) folds into the TRAM domain.

This sequence belongs to the methylthiotransferase family. RimO subfamily. It depends on [4Fe-4S] cluster as a cofactor.

Its subcellular location is the cytoplasm. The catalysed reaction is L-aspartate(89)-[ribosomal protein uS12]-hydrogen + (sulfur carrier)-SH + AH2 + 2 S-adenosyl-L-methionine = 3-methylsulfanyl-L-aspartate(89)-[ribosomal protein uS12]-hydrogen + (sulfur carrier)-H + 5'-deoxyadenosine + L-methionine + A + S-adenosyl-L-homocysteine + 2 H(+). Functionally, catalyzes the methylthiolation of an aspartic acid residue of ribosomal protein uS12. In Synechocystis sp. (strain ATCC 27184 / PCC 6803 / Kazusa), this protein is Ribosomal protein uS12 methylthiotransferase RimO.